Consider the following 616-residue polypeptide: Dihydroxy-acid dehydratase (616 aa).

Aspartate 81 is a binding site for Mg(2+). [2Fe-2S] cluster is bound at residue cysteine 122. Residues aspartate 123 and lysine 124 each coordinate Mg(2+). Lysine 124 is modified (N6-carboxylysine). Cysteine 195 contacts [2Fe-2S] cluster. Glutamate 491 lines the Mg(2+) pocket. The active-site Proton acceptor is serine 517.

This sequence belongs to the IlvD/Edd family. As to quaternary structure, homodimer. The cofactor is [2Fe-2S] cluster. Mg(2+) serves as cofactor.

It carries out the reaction (2R)-2,3-dihydroxy-3-methylbutanoate = 3-methyl-2-oxobutanoate + H2O. The catalysed reaction is (2R,3R)-2,3-dihydroxy-3-methylpentanoate = (S)-3-methyl-2-oxopentanoate + H2O. Its pathway is amino-acid biosynthesis; L-isoleucine biosynthesis; L-isoleucine from 2-oxobutanoate: step 3/4. It functions in the pathway amino-acid biosynthesis; L-valine biosynthesis; L-valine from pyruvate: step 3/4. Its function is as follows. Functions in the biosynthesis of branched-chain amino acids. Catalyzes the dehydration of (2R,3R)-2,3-dihydroxy-3-methylpentanoate (2,3-dihydroxy-3-methylvalerate) into 2-oxo-3-methylpentanoate (2-oxo-3-methylvalerate) and of (2R)-2,3-dihydroxy-3-methylbutanoate (2,3-dihydroxyisovalerate) into 2-oxo-3-methylbutanoate (2-oxoisovalerate), the penultimate precursor to L-isoleucine and L-valine, respectively. The chain is Dihydroxy-acid dehydratase from Klebsiella pneumoniae (strain 342).